The chain runs to 656 residues: Squalene-hopene cyclase (656 aa).

A PFTB 1 repeat occupies 68–110 (EQKIANYLRRCQSREHWGWPVYYGGEFNISASVQAYFALKMTG). Residue Asp396 is the Proton donor of the active site. PFTB repeat units follow at residues 417 to 459 (LDRA…ALLD), 485 to 525 (IERG…NASG), 533 to 582 (VLKC…GLMA), and 591 to 634 (VKRG…QFFP).

This sequence belongs to the terpene cyclase/mutase family.

It catalyses the reaction squalene = hop-22(29)-ene. It carries out the reaction squalene + H2O = hopan-22-ol. In terms of biological role, squalene cyclase that catalyzes the oxygen-independent cyclization of squalene into hopanoids, a class of cyclic triterpenoids including hop-22(29)-ene, hop-17(21)-ene, hop-21(22)-ene, and hopan-22-ol. The chain is Squalene-hopene cyclase from Schizosaccharomyces japonicus (strain yFS275 / FY16936) (Fission yeast).